Here is a 466-residue protein sequence, read N- to C-terminus: Acetyl-coenzyme A carboxylase carboxyl transferase subunit beta, chloroplastic (466 aa).

Residues 198-466 (LWIQCENCYE…FPLNQNSIGQ (269 aa)) form the CoA carboxyltransferase N-terminal domain. Zn(2+)-binding residues include Cys-202, Cys-205, Cys-221, and Cys-224. Residues 202–224 (CENCYELNYKKLLKSKMRICDEC) form a C4-type zinc finger.

The protein belongs to the AccD/PCCB family. In terms of assembly, acetyl-CoA carboxylase is a heterohexamer composed of biotin carboxyl carrier protein, biotin carboxylase and 2 subunits each of ACCase subunit alpha and ACCase plastid-coded subunit beta (accD). Zn(2+) is required as a cofactor.

The protein resides in the plastid. The protein localises to the chloroplast stroma. The enzyme catalyses N(6)-carboxybiotinyl-L-lysyl-[protein] + acetyl-CoA = N(6)-biotinyl-L-lysyl-[protein] + malonyl-CoA. It participates in lipid metabolism; malonyl-CoA biosynthesis; malonyl-CoA from acetyl-CoA: step 1/1. Component of the acetyl coenzyme A carboxylase (ACC) complex. Biotin carboxylase (BC) catalyzes the carboxylation of biotin on its carrier protein (BCCP) and then the CO(2) group is transferred by the transcarboxylase to acetyl-CoA to form malonyl-CoA. The protein is Acetyl-coenzyme A carboxylase carboxyl transferase subunit beta, chloroplastic of Fagopyrum esculentum subsp. ancestrale (Wild buckwheat).